The sequence spans 274 residues: Oxidized low-density lipoprotein receptor 1 (274 aa).

Basic and acidic residues predominate over residues 1–16 (MAVDDLKVKPMKDQPD). A disordered region spans residues 1-25 (MAVDDLKVKPMKDQPDQKSNGKKPK). At 1–31 (MAVDDLKVKPMKDQPDQKSNGKKPKGLRFLS) the chain is on the cytoplasmic side. Residues 32–54 (SPWWCPAAVALGVLCLGSLMTII) form a helical; Signal-anchor for type II membrane protein membrane-spanning segment. 2 S-palmitoyl cysteine lipidation sites follow: cysteine 36 and cysteine 46. A neck region spans residues 55–150 (MLGMQLLQVS…SGPCPEDWLW (96 aa)). Over 55–274 (MLGMQLLQVS…QKKANLLRSE (220 aa)) the chain is Extracellular. N-linked (GlcNAc...) asparagine glycans are attached at residues asparagine 73 and asparagine 139. A coiled-coil region spans residues 84–139 (QVLAQQQAEAASQESQRELKEMIETLAKRLDEKSKKQMELNHQYLNLQEALKRMDN). Disulfide bonds link cysteine 144-cysteine 155, cysteine 172-cysteine 264, and cysteine 243-cysteine 256. Residues 151-265 (HGKNCYLFSS…CILVAYSICQ (115 aa)) form the C-type lectin domain.

Homodimer; disulfide-linked. May form a hexamer composed of 3 homodimers. Interacts with HSP70. Post-translationally, N-glycosylated.

The protein localises to the cell membrane. Its subcellular location is the membrane raft. The protein resides in the secreted. Its function is as follows. Receptor that mediates the recognition, internalization and degradation of oxidatively modified low density lipoprotein (oxLDL) by vascular endothelial cells. OxLDL is a marker of atherosclerosis that induces vascular endothelial cell activation and dysfunction, resulting in pro-inflammatory responses, pro-oxidative conditions and apoptosis. Its association with oxLDL induces the activation of NF-kappa-B through an increased production of intracellular reactive oxygen and a variety of pro-atherogenic cellular responses including a reduction of nitric oxide (NO) release, monocyte adhesion and apoptosis. In addition to binding oxLDL, it acts as a receptor for the HSP70 protein involved in antigen cross-presentation to naive T-cells in dendritic cells, thereby participating in cell-mediated antigen cross-presentation. Also involved in inflammatory process, by acting as a leukocyte-adhesion molecule at the vascular interface in endotoxin-induced inflammation. Also acts as a receptor for advanced glycation end (AGE) products, activated platelets, monocytes, apoptotic cells and both Gram-negative and Gram-positive bacteria. The chain is Oxidized low-density lipoprotein receptor 1 (OLR1) from Oryctolagus cuniculus (Rabbit).